Consider the following 547-residue polypeptide: Phosphomethylpyrimidine synthase (547 aa).

The segment covering 1 to 15 (MTETLSKTTEPSVTT) has biased composition (polar residues). Residues 1–36 (MTETLSKTTEPSVTTGPIPGSSKAYREVANPDGGPS) form a disordered region. Substrate-binding positions include N150, M179, Y208, H244, 264-266 (SRG), 305-308 (DGLR), and E344. H348 contributes to the Zn(2+) binding site. Substrate is bound at residue Y371. H412 is a Zn(2+) binding site. Residues C492, C495, and C500 each contribute to the [4Fe-4S] cluster site.

It belongs to the ThiC family. [4Fe-4S] cluster is required as a cofactor.

It catalyses the reaction 5-amino-1-(5-phospho-beta-D-ribosyl)imidazole + S-adenosyl-L-methionine = 4-amino-2-methyl-5-(phosphooxymethyl)pyrimidine + CO + 5'-deoxyadenosine + formate + L-methionine + 3 H(+). It functions in the pathway cofactor biosynthesis; thiamine diphosphate biosynthesis. In terms of biological role, catalyzes the synthesis of the hydroxymethylpyrimidine phosphate (HMP-P) moiety of thiamine from aminoimidazole ribotide (AIR) in a radical S-adenosyl-L-methionine (SAM)-dependent reaction. This is Phosphomethylpyrimidine synthase from Mycobacterium leprae (strain Br4923).